We begin with the raw amino-acid sequence, 28 residues long: U-actitoxin-Ate1 (28 aa).

The first 15 residues, 1-15 (MSLILIFFAFTVLKS), serve as a signal peptide directing secretion. C20 and C26 are joined by a disulfide.

As to quaternary structure, monomer in solution. Post-translationally, may be N-glycosylated at Asn-22. Activity with this modification has not be tested. As to expression, highly expressed in the tentacles. Weakly expressed in acrorhagi and mesenteric filaments.

It localises to the secreted. The protein resides in the nematocyst. In terms of biological role, probable toxin expected to be employed in prey capture and/or defense against predators (based on its abundance in tentacles). Has only a weak affinity for lipid membranes. Shows moderate cytotoxic activity against breast cancer cell lines (MCF-7 and MDA-MB-231). This chain is U-actitoxin-Ate1, found in Actinia tenebrosa (Australian red waratah sea anemone).